Consider the following 341-residue polypeptide: Nicotinate-nucleotide--dimethylbenzimidazole phosphoribosyltransferase (341 aa).

The active-site Proton acceptor is the E306.

Belongs to the CobT family.

It catalyses the reaction 5,6-dimethylbenzimidazole + nicotinate beta-D-ribonucleotide = alpha-ribazole 5'-phosphate + nicotinate + H(+). The protein operates within nucleoside biosynthesis; alpha-ribazole biosynthesis; alpha-ribazole from 5,6-dimethylbenzimidazole: step 1/2. Catalyzes the synthesis of alpha-ribazole-5'-phosphate from nicotinate mononucleotide (NAMN) and 5,6-dimethylbenzimidazole (DMB). This is Nicotinate-nucleotide--dimethylbenzimidazole phosphoribosyltransferase from Methylocella silvestris (strain DSM 15510 / CIP 108128 / LMG 27833 / NCIMB 13906 / BL2).